The following is a 556-amino-acid chain: Delta-1-pyrroline-5-carboxylate dehydrogenase, mitochondrial (556 aa).

The N-terminal 17 residues, 1–17, are a transit peptide targeting the mitochondrion; that stretch reads MLRARSAVSQSWKGFKT. Residues Lys-226 and 279 to 283 each bind NAD(+); that span reads GSVPT. Residue Glu-307 is the Proton acceptor of the active site. The active-site Nucleophile is the Cys-341. Residue Glu-440 coordinates NAD(+). Substrate is bound at residue Ser-506.

The protein belongs to the aldehyde dehydrogenase family.

The protein localises to the mitochondrion matrix. It catalyses the reaction L-glutamate 5-semialdehyde + NAD(+) + H2O = L-glutamate + NADH + 2 H(+). The protein operates within amino-acid degradation; L-proline degradation into L-glutamate; L-glutamate from L-proline: step 2/2. Its function is as follows. Irreversible conversion of delta-1-pyrroline-5-carboxylate (P5C), derived either from proline or ornithine, to glutamate. This is a necessary step in the pathway interconnecting the urea and tricarboxylic acid cycles. In Danio rerio (Zebrafish), this protein is Delta-1-pyrroline-5-carboxylate dehydrogenase, mitochondrial (aldh4a1).